The chain runs to 300 residues: Formate dehydrogenase-O iron-sulfur subunit (300 aa).

Topologically, residues 1-260 are cytoplasmic; it reads MAYQSQDIIR…KFWKGIWKPL (260 aa). 4Fe-4S ferredoxin-type domains are found at residues 30 to 60, 91 to 123, 124 to 153, and 158 to 189; these read VAKL…DTVG, LEWL…QYAN, GIVD…LNPE, and YKCT…FGTK. [4Fe-4S] cluster contacts are provided by Cys-39, Cys-42, Cys-45, Cys-49, Cys-100, Cys-103, Cys-108, Cys-112, Cys-133, Cys-136, Cys-139, Cys-143, Cys-160, Cys-163, Cys-175, and Cys-179. The chain crosses the membrane as a helical span at residues 261-279; that stretch reads AAVGFAATFAASIFHYVGV. Residues 280-300 lie on the Periplasmic side of the membrane; that stretch reads GPNRADEEENNLHEEKDEERK.

Formate dehydrogenase is a membrane-bound complex, formed by subunits alpha, beta and gamma. Requires [4Fe-4S] cluster as cofactor.

Its subcellular location is the cell membrane. Allows to use formate as major electron donor during aerobic respiration. The beta chain is an electron transfer unit containing 4 cysteine clusters involved in the formation of iron-sulfur centers. Electrons are transferred from the gamma chain to the molybdenum cofactor of the alpha subunit. In Escherichia coli (strain K12), this protein is Formate dehydrogenase-O iron-sulfur subunit (fdoH).